The primary structure comprises 100 residues: NAD(P)H-quinone oxidoreductase subunit 4L, chloroplastic (100 aa).

The next 3 helical transmembrane spans lie at 1–21 (MFGHALLLGAFPFCIGIYGLI), 29–49 (ALMCLELIFNAVNVNFVTFPN), and 63–83 (VFVIAVAAAEAAIGSAIVLAI).

It belongs to the complex I subunit 4L family. In terms of assembly, NDH is composed of at least 16 different subunits, 5 of which are encoded in the nucleus.

The protein resides in the plastid. Its subcellular location is the chloroplast thylakoid membrane. The enzyme catalyses a plastoquinone + NADH + (n+1) H(+)(in) = a plastoquinol + NAD(+) + n H(+)(out). It catalyses the reaction a plastoquinone + NADPH + (n+1) H(+)(in) = a plastoquinol + NADP(+) + n H(+)(out). Its function is as follows. NDH shuttles electrons from NAD(P)H:plastoquinone, via FMN and iron-sulfur (Fe-S) centers, to quinones in the photosynthetic chain and possibly in a chloroplast respiratory chain. The immediate electron acceptor for the enzyme in this species is believed to be plastoquinone. Couples the redox reaction to proton translocation, and thus conserves the redox energy in a proton gradient. The chain is NAD(P)H-quinone oxidoreductase subunit 4L, chloroplastic from Huperzia lucidula (Shining clubmoss).